A 1087-amino-acid polypeptide reads, in one-letter code: DNA polymerase II large subunit (1087 aa).

The protein belongs to the archaeal DNA polymerase II family. As to quaternary structure, heterodimer of a large subunit and a small subunit.

It carries out the reaction DNA(n) + a 2'-deoxyribonucleoside 5'-triphosphate = DNA(n+1) + diphosphate. The catalysed reaction is Exonucleolytic cleavage in the 3'- to 5'-direction to yield nucleoside 5'-phosphates.. Possesses two activities: a DNA synthesis (polymerase) and an exonucleolytic activity that degrades single-stranded DNA in the 3'- to 5'-direction. Has a template-primer preference which is characteristic of a replicative DNA polymerase. This chain is DNA polymerase II large subunit (polC), found in Thermoplasma acidophilum (strain ATCC 25905 / DSM 1728 / JCM 9062 / NBRC 15155 / AMRC-C165).